A 235-amino-acid polypeptide reads, in one-letter code: MFKLTEKGEKIQEMFDTIAPRYDFLNRVLSFGIDRSWRRFAVKKIKYAPNGRILDVATGTGDVALEIAARTPSSVSITGIDFSGEMVELGKQKVAASSYAGRINMQVAPCEDIPFADDSFDSITIAFGIRNVVDRSQGLKEMYRVLKPGGRVVILEFSTPRFVLFKHLYHFYFLKVLPVIGGLFSKFSAYKYLPDSVIEFPSQDQFKATMAGVGFKNTQHHDLTLGIATVYTGEK.

S-adenosyl-L-methionine contacts are provided by Thr60 and Asp81.

This sequence belongs to the class I-like SAM-binding methyltransferase superfamily. MenG/UbiE family.

It catalyses the reaction a 2-demethylmenaquinol + S-adenosyl-L-methionine = a menaquinol + S-adenosyl-L-homocysteine + H(+). It carries out the reaction a 2-methoxy-6-(all-trans-polyprenyl)benzene-1,4-diol + S-adenosyl-L-methionine = a 5-methoxy-2-methyl-3-(all-trans-polyprenyl)benzene-1,4-diol + S-adenosyl-L-homocysteine + H(+). Its pathway is quinol/quinone metabolism; menaquinone biosynthesis; menaquinol from 1,4-dihydroxy-2-naphthoate: step 2/2. It participates in cofactor biosynthesis; ubiquinone biosynthesis. Its function is as follows. Methyltransferase required for the conversion of demethylmenaquinol (DMKH2) to menaquinol (MKH2) and the conversion of 2-polyprenyl-6-methoxy-1,4-benzoquinol (DDMQH2) to 2-polyprenyl-3-methyl-6-methoxy-1,4-benzoquinol (DMQH2). The polypeptide is Ubiquinone/menaquinone biosynthesis C-methyltransferase UbiE (Geotalea daltonii (strain DSM 22248 / JCM 15807 / FRC-32) (Geobacter daltonii)).